Here is a 227-residue protein sequence, read N- to C-terminus: Biosynthetic peptidoglycan transglycosylase (227 aa).

Residues 7-27 (VALLTLLLLVAAPYVLTLVYG) form a helical membrane-spanning segment.

The protein belongs to the glycosyltransferase 51 family.

Its subcellular location is the cell inner membrane. It carries out the reaction [GlcNAc-(1-&gt;4)-Mur2Ac(oyl-L-Ala-gamma-D-Glu-L-Lys-D-Ala-D-Ala)](n)-di-trans,octa-cis-undecaprenyl diphosphate + beta-D-GlcNAc-(1-&gt;4)-Mur2Ac(oyl-L-Ala-gamma-D-Glu-L-Lys-D-Ala-D-Ala)-di-trans,octa-cis-undecaprenyl diphosphate = [GlcNAc-(1-&gt;4)-Mur2Ac(oyl-L-Ala-gamma-D-Glu-L-Lys-D-Ala-D-Ala)](n+1)-di-trans,octa-cis-undecaprenyl diphosphate + di-trans,octa-cis-undecaprenyl diphosphate + H(+). The protein operates within cell wall biogenesis; peptidoglycan biosynthesis. In terms of biological role, peptidoglycan polymerase that catalyzes glycan chain elongation from lipid-linked precursors. The protein is Biosynthetic peptidoglycan transglycosylase of Rhodopseudomonas palustris (strain HaA2).